Reading from the N-terminus, the 921-residue chain is Isoleucine--tRNA ligase (921 aa).

The 'HIGH' region motif lies at 57–67; it reads PYANGELHMGH. Position 552 (E552) interacts with L-isoleucyl-5'-AMP. Residues 593–597 carry the 'KMSKS' region motif; it reads KMSKS. K596 serves as a coordination point for ATP. Zn(2+) contacts are provided by C888, C891, C908, and C911.

It belongs to the class-I aminoacyl-tRNA synthetase family. IleS type 1 subfamily. In terms of assembly, monomer. Requires Zn(2+) as cofactor.

Its subcellular location is the cytoplasm. It carries out the reaction tRNA(Ile) + L-isoleucine + ATP = L-isoleucyl-tRNA(Ile) + AMP + diphosphate. Its function is as follows. Catalyzes the attachment of isoleucine to tRNA(Ile). As IleRS can inadvertently accommodate and process structurally similar amino acids such as valine, to avoid such errors it has two additional distinct tRNA(Ile)-dependent editing activities. One activity is designated as 'pretransfer' editing and involves the hydrolysis of activated Val-AMP. The other activity is designated 'posttransfer' editing and involves deacylation of mischarged Val-tRNA(Ile). This chain is Isoleucine--tRNA ligase, found in Listeria monocytogenes serotype 4b (strain F2365).